The following is a 30-amino-acid chain: Cycloviolacin-H4 (30 aa).

Positions 1 to 30 (GIPCAESCVWIPCTVTALLGCSCSNNVCYN) form a cross-link, cyclopeptide (Gly-Asn). Intrachain disulfides connect Cys4–Cys21, Cys8–Cys23, and Cys13–Cys28.

In terms of processing, this is a cyclic peptide.

In terms of biological role, probably participates in a plant defense mechanism. Has potent hemolytic activity. The protein is Cycloviolacin-H4 of Viola hederacea (Australian violet).